A 395-amino-acid polypeptide reads, in one-letter code: Acetate kinase 2 (395 aa).

Asn-8 serves as a coordination point for Mg(2+). ATP is bound at residue Lys-15. A substrate-binding site is contributed by Arg-89. Asp-146 serves as the catalytic Proton donor/acceptor. ATP contacts are provided by residues 206 to 210 (HIGNG), 283 to 285 (DMR), and 331 to 335 (GVGEN). Glu-383 is a binding site for Mg(2+).

It belongs to the acetokinase family. Homodimer. Mg(2+) is required as a cofactor. The cofactor is Mn(2+).

It is found in the cytoplasm. The enzyme catalyses acetate + ATP = acetyl phosphate + ADP. Its pathway is metabolic intermediate biosynthesis; acetyl-CoA biosynthesis; acetyl-CoA from acetate: step 1/2. Its function is as follows. Catalyzes the formation of acetyl phosphate from acetate and ATP. Can also catalyze the reverse reaction. In Lactococcus lactis subsp. lactis (strain IL1403) (Streptococcus lactis), this protein is Acetate kinase 2.